Here is a 322-residue protein sequence, read N- to C-terminus: MIKAGIIGGAGYTAGELIRLLINHPETEIVFINSTSNAGNKITDVHEGLYGECDLTFTDELPLEDIDVLFFCTAHGDTKKFMESHNIPEELKIIDLSMDYRIASPDHDFIYGLPELNRRATCTAKHVANPGCFATCIQLGLLPLAKHLMLNEDVMVNAITGSTGAGVKPGATSHFSWRNNNMSVYKAFEHQHVPEIKQSLKQLQNSFDAEIDFIPYRGDFPRGIFATLVVKTKVALEEIVRMYEEYYAKDSFVHIVDKNIDLKQVVNTNKCLIHLEKHGDKLLIISCIDNLLKGASGQAVHNMNLMFNLEETVGLRLKPSAF.

C132 is a catalytic residue.

This sequence belongs to the NAGSA dehydrogenase family. Type 1 subfamily.

The protein resides in the cytoplasm. It carries out the reaction N-acetyl-L-glutamate 5-semialdehyde + phosphate + NADP(+) = N-acetyl-L-glutamyl 5-phosphate + NADPH + H(+). Its pathway is amino-acid biosynthesis; L-arginine biosynthesis; N(2)-acetyl-L-ornithine from L-glutamate: step 3/4. Functionally, catalyzes the NADPH-dependent reduction of N-acetyl-5-glutamyl phosphate to yield N-acetyl-L-glutamate 5-semialdehyde. The polypeptide is N-acetyl-gamma-glutamyl-phosphate reductase (Bacteroides fragilis (strain YCH46)).